Here is a 418-residue protein sequence, read N- to C-terminus: Gamma-glutamyl phosphate reductase (418 aa).

Belongs to the gamma-glutamyl phosphate reductase family.

Its subcellular location is the cytoplasm. It carries out the reaction L-glutamate 5-semialdehyde + phosphate + NADP(+) = L-glutamyl 5-phosphate + NADPH + H(+). It participates in amino-acid biosynthesis; L-proline biosynthesis; L-glutamate 5-semialdehyde from L-glutamate: step 2/2. Functionally, catalyzes the NADPH-dependent reduction of L-glutamate 5-phosphate into L-glutamate 5-semialdehyde and phosphate. The product spontaneously undergoes cyclization to form 1-pyrroline-5-carboxylate. The chain is Gamma-glutamyl phosphate reductase from Nitrosococcus oceani (strain ATCC 19707 / BCRC 17464 / JCM 30415 / NCIMB 11848 / C-107).